The following is a 20-amino-acid chain: Superoxide dismutase [Mn], mitochondrial (20 aa).

Belongs to the iron/manganese superoxide dismutase family. Homotetramer. The cofactor is Mn(2+).

Its subcellular location is the mitochondrion matrix. The catalysed reaction is 2 superoxide + 2 H(+) = H2O2 + O2. Its function is as follows. Destroys superoxide anion radicals which are normally produced within the cells and which are toxic to biological systems. The sequence is that of Superoxide dismutase [Mn], mitochondrial (SODA) from Hordeum vulgare (Barley).